The sequence spans 92 residues: MARKCEITGKKTMFGNNVPRKGLAKKKGGAGQHIGVKTKRTFKVNLINKKFFIPELGRSINIKVSANALRSISKVGLDAFLKKNCKKIENFL.

Belongs to the bacterial ribosomal protein bL28 family.

In Borrelia garinii subsp. bavariensis (strain ATCC BAA-2496 / DSM 23469 / PBi) (Borreliella bavariensis), this protein is Large ribosomal subunit protein bL28.